A 326-amino-acid chain; its full sequence is Pyruvate dehydrogenase E1 component subunit alpha (326 aa).

As to quaternary structure, heterodimer of an alpha and a beta chain. Thiamine diphosphate serves as cofactor.

The enzyme catalyses N(6)-[(R)-lipoyl]-L-lysyl-[protein] + pyruvate + H(+) = N(6)-[(R)-S(8)-acetyldihydrolipoyl]-L-lysyl-[protein] + CO2. In terms of biological role, the pyruvate dehydrogenase complex catalyzes the overall conversion of pyruvate to acetyl-CoA and CO(2). It contains multiple copies of three enzymatic components: pyruvate dehydrogenase (E1), dihydrolipoamide acetyltransferase (E2) and lipoamide dehydrogenase (E3). In Rickettsia felis (strain ATCC VR-1525 / URRWXCal2) (Rickettsia azadi), this protein is Pyruvate dehydrogenase E1 component subunit alpha (pdhA).